A 278-amino-acid chain; its full sequence is DNA repair protein RecO (278 aa).

Over residues 1-12 the composition is skewed to polar residues; that stretch reads MGTNDALTSTED. The tract at residues 1-42 is disordered; the sequence is MGTNDALTSTEDAVTAGANDAPLPAPPEPPRKARRATSRTSD.

It belongs to the RecO family.

Its function is as follows. Involved in DNA repair and RecF pathway recombination. The sequence is that of DNA repair protein RecO from Burkholderia lata (strain ATCC 17760 / DSM 23089 / LMG 22485 / NCIMB 9086 / R18194 / 383).